Consider the following 1512-residue polypeptide: Mitogen-activated protein kinase kinase kinase 1 (1512 aa).

Over residues 1-13 the composition is skewed to low complexity; the sequence is MAAAAGNRASSSG. Disordered regions lie at residues 1 to 37, 67 to 181, and 213 to 304; these read MAAA…SSAP, SVEL…DRPE, and VKPI…PEET. A2 is subject to N-acetylalanine. S21 and S35 each carry phosphoserine. Composition is skewed to low complexity over residues 81-99, 129-142, and 150-160; these read AASP…ADAA, AAPD…AAAE, and AAEPSPAAAPA. S137 and S154 each carry phosphoserine. Residues 162-181 are compositionally biased toward basic and acidic residues; that stretch reads REMENKETLKGLHKMDDRPE. Low complexity predominate over residues 250–260; it reads SPSPGNSPSGR. S275 carries the phosphoserine modification. T285 carries the post-translational modification Phosphothreonine. A phosphoserine mark is found at S292, S297, and S300. The SWIM-type zinc finger occupies 338–366; sequence YRVFIGPQNCSCARGTFCIHLLFVMLRVF. The span at 416–433 shows a compositional bias: low complexity; sequence SNSHTLSSSSTSTSSSEN. A disordered region spans residues 416-436; the sequence is SNSHTLSSSSTSTSSSENSIK. The segment at 443 to 492 adopts an RING-type zinc-finger fold; sequence CPICLLGMLDEESLTVCEDGCRNKLHHHCMSIWAEECRRNREPLICPLCR. 2 positions are modified to phosphoserine: S507 and S531. 2 disordered regions span residues 511 to 532 and 602 to 624; these read SPSS…AGSR and STGN…GSSQ. Residues 611–624 are compositionally biased toward low complexity; sequence GSSPSGGATSGSSQ. S923 is modified (phosphoserine). The segment at 933-972 is disordered; it reads SISVGPSSSTTTTTTTTEQPKPMVQTKGRPHSQCLNSSPL. Low complexity predominate over residues 939-949; that stretch reads SSSTTTTTTTT. S1018 carries the phosphoserine modification. A compositionally biased stretch (basic and acidic residues) spans 1032 to 1041; the sequence is NCPENKDSDK. A disordered region spans residues 1032 to 1087; that stretch reads NCPENKDSDKLSPVFTQSRPLPSSNIHRPKPSRPTPGNTSKQGDPSKNSMTLDLNS. A Phosphoserine modification is found at S1043. Composition is skewed to polar residues over residues 1045-1057 and 1066-1087; these read VFTQ…SSNI and TPGN…DLNS. A Protein kinase domain is found at 1243 to 1508; it reads WLKGQQIGLG…SRELLKHPVF (266 aa). ATP-binding positions include 1249–1257 and K1272; that span reads IGLGAFSSC. The Proton acceptor role is filled by D1369. Phosphothreonine; by autocatalysis is present on residues T1400 and T1412.

It belongs to the protein kinase superfamily. STE Ser/Thr protein kinase family. MAP kinase kinase kinase subfamily. In terms of assembly, binds both upstream activators and downstream substrates in multimolecular complexes through its N-terminus. Oligomerizes after binding MAP2K4 or TRAF2. Interacts with AXIN1. Interacts (via the kinase catalytic domain) with STK38. Interacts with GRIPAP1. Mg(2+) is required as a cofactor. Post-translationally, autophosphorylated.

The enzyme catalyses L-seryl-[protein] + ATP = O-phospho-L-seryl-[protein] + ADP + H(+). It carries out the reaction L-threonyl-[protein] + ATP = O-phospho-L-threonyl-[protein] + ADP + H(+). The catalysed reaction is S-ubiquitinyl-[E2 ubiquitin-conjugating enzyme]-L-cysteine + [acceptor protein]-L-lysine = [E2 ubiquitin-conjugating enzyme]-L-cysteine + N(6)-ubiquitinyl-[acceptor protein]-L-lysine.. Its activity is regulated as follows. Activated by autophosphorylation on Thr-1400 and Thr-1412 following oligomerization. In terms of biological role, component of a protein kinase signal transduction cascade. Activates the ERK and JNK kinase pathways by phosphorylation of MAP2K1 and MAP2K4. May phosphorylate the MAPK8/JNK1 kinase. Activates CHUK and IKBKB, the central protein kinases of the NF-kappa-B pathway. The protein is Mitogen-activated protein kinase kinase kinase 1 (MAP3K1) of Homo sapiens (Human).